The primary structure comprises 658 residues: MEGRFQLVAPYEPQGDQPQAIAKLVDGLRRGVKHQTLLGATGTGKTFTISNVIAQVNKPTLVIAHNKTLAGQLYSELKEFFPHNAVEYFVSYYDYYQPEAYVPQTDTYIEKDAKINDEIDKLRHSATSALFERRDVIIVASVSCIYGLGSPEEYRELVVSLRVGMEIERNALLRRLVDIQYDRNDIDFRRGTFRVRGDVVEIFPASRDEHCIRVEFFGDEIERIREVDALTGEVLGEREHVAIFPASHFVTREEKMRLAIQNIEQELEERLAELRAQGKLLEAQRLEQRTRYDLEMMREMGFCSGIENYSRHLALRPPGSTPYTLLDYFPDDFLIIVDESHVTLPQLRGMYNGDRARKQVLVDHGFRLPSALDNRPLTFEEFEQKINQIIYVSATPGPYELEHSPGVVEQIIRPTGLLDPTIDVRPTKGQIDDLIGEIRERVERNERTLVTTLTKKMAEDLTDYLKEAGIKVAYLHSEIKTLERIEIIRDLRLGKYDVLVGINLLREGLDIPEVSLVAILDADKEGFLRSERSLIQTIGRAARNANGHVIMYADTITKSMEVAIQETKRRRAIQEEYNRKHGIVPRTVKKEIRDVIRATYAAEETEMYEAKPAAAMTKQEREELIRTLEAEMKEAAKALDFERAAQLRDIIFELKAEG.

One can recognise a Helicase ATP-binding domain in the interval 26 to 414; it reads DGLRRGVKHQ…PGVVEQIIRP (389 aa). 39–46 is an ATP binding site; that stretch reads GATGTGKT. A Beta-hairpin motif is present at residues 92–115; it reads YYDYYQPEAYVPQTDTYIEKDAKI. One can recognise a Helicase C-terminal domain in the interval 430 to 596; the sequence is QIDDLIGEIR…TVKKEIRDVI (167 aa). The 36-residue stretch at 622 to 657 folds into the UVR domain; it reads EELIRTLEAEMKEAAKALDFERAAQLRDIIFELKAE.

This sequence belongs to the UvrB family. Forms a heterotetramer with UvrA during the search for lesions. Interacts with UvrC in an incision complex.

It localises to the cytoplasm. In terms of biological role, the UvrABC repair system catalyzes the recognition and processing of DNA lesions. A damage recognition complex composed of 2 UvrA and 2 UvrB subunits scans DNA for abnormalities. Upon binding of the UvrA(2)B(2) complex to a putative damaged site, the DNA wraps around one UvrB monomer. DNA wrap is dependent on ATP binding by UvrB and probably causes local melting of the DNA helix, facilitating insertion of UvrB beta-hairpin between the DNA strands. Then UvrB probes one DNA strand for the presence of a lesion. If a lesion is found the UvrA subunits dissociate and the UvrB-DNA preincision complex is formed. This complex is subsequently bound by UvrC and the second UvrB is released. If no lesion is found, the DNA wraps around the other UvrB subunit that will check the other stand for damage. In Geobacillus kaustophilus (strain HTA426), this protein is UvrABC system protein B.